We begin with the raw amino-acid sequence, 457 residues long: Cyclic dof factor 2 (457 aa).

A disordered region spans residues 1–130 (MADPAIKLFG…GGTACSQEGK (130 aa)). Polar residues predominate over residues 22 to 35 (DSSSSYTGFLTETQ). Composition is skewed to acidic residues over residues 45-54 (TGDDDDEEMG) and 62-73 (EGDDVGDGGGES). 2 stretches are compositionally biased toward basic and acidic residues: residues 74 to 94 (ETDK…RNES) and 106 to 118 (EKTE…KTNE). The segment at 138-192 (LPCPRCNSMETKFCYYNNYNVNQPRHFCKKCQRYWTAGGTMRNVPVGAGRRKNKS) adopts a Dof-type zinc-finger fold. Residues cysteine 140, cysteine 143, cysteine 165, and cysteine 168 each contribute to the Zn(2+) site. Disordered stretches follow at residues 334–377 (QPNS…KSKP) and 417–457 (AFRS…HESS). Residues 337-346 (SPSGSNPNSP) show a composition bias toward low complexity.

In terms of assembly, interacts with ADO2 (via kelch repeats) and ADO3 (via kelch repeats). As to expression, expressed in the vasculature of cotyledons and hypocotyls, leaves and roots.

It is found in the nucleus. Functionally, transcription factor that binds specifically to a 5'-AA[AG]G-3' consensus core sequence. Regulates a photoperiodic flowering response. Transcriptional repressor of 'CONSTANS' expression. The stability of CDF2 is controlled by 'GIGANTEA' and redundantly by ADO3, ADO2 and/or ADO1. This chain is Cyclic dof factor 2 (CDF2), found in Arabidopsis thaliana (Mouse-ear cress).